The sequence spans 319 residues: Ribonuclease Z (319 aa).

Zn(2+) is bound by residues His62, His64, Asp66, His67, His145, Asp215, and His273. The active-site Proton acceptor is Asp66.

The protein belongs to the RNase Z family. As to quaternary structure, homodimer. Zn(2+) serves as cofactor.

It carries out the reaction Endonucleolytic cleavage of RNA, removing extra 3' nucleotides from tRNA precursor, generating 3' termini of tRNAs. A 3'-hydroxy group is left at the tRNA terminus and a 5'-phosphoryl group is left at the trailer molecule.. Zinc phosphodiesterase, which displays some tRNA 3'-processing endonuclease activity. Probably involved in tRNA maturation, by removing a 3'-trailer from precursor tRNA. The polypeptide is Ribonuclease Z (Borrelia recurrentis (strain A1)).